Consider the following 118-residue polypeptide: Large ribosomal subunit protein bL20c (118 aa).

The protein belongs to the bacterial ribosomal protein bL20 family.

Its subcellular location is the plastid. Functionally, binds directly to 23S ribosomal RNA and is necessary for the in vitro assembly process of the 50S ribosomal subunit. It is not involved in the protein synthesizing functions of that subunit. This Cuscuta reflexa (Southern Asian dodder) protein is Large ribosomal subunit protein bL20c (rpl20).